Here is a 254-residue protein sequence, read N- to C-terminus: PF03932 family protein CutC (254 aa).

It belongs to the CutC family.

Its subcellular location is the cytoplasm. The sequence is that of PF03932 family protein CutC from Yersinia pseudotuberculosis serotype O:1b (strain IP 31758).